Reading from the N-terminus, the 277-residue chain is Carbonyl reductase [NADPH] 3 (277 aa).

An N-acetylserine modification is found at serine 2. NADP(+) is bound by residues 10 to 34 (VTGANKGIGFAITRDLCRKFSGDVV), 38 to 42 (RDEAR), 63 to 64 (DI), and asparagine 90. A Phosphoserine modification is found at serine 30. Residue serine 140 coordinates substrate. Tyrosine 194 serves as the catalytic Proton acceptor. 194–198 (YGVSK) contacts NADP(+).

It belongs to the short-chain dehydrogenases/reductases (SDR) family.

The protein resides in the cytoplasm. The catalysed reaction is a secondary alcohol + NADP(+) = a ketone + NADPH + H(+). It carries out the reaction a quinone + NADPH + H(+) = a quinol + NADP(+). Catalyzes the NADPH-dependent reduction of carbonyl compounds to their corresponding alcohols. Has low NADPH-dependent oxidoreductase activity. Acts on several orthoquinones, as well as on non-quinone compounds, such as isatin or on the anticancer drug oracin. Best substrates for CBR3 is 1,2- naphthoquinone, hence could play a role in protection against cytotoxicity of exogenous quinones. Exerts activity toward ortho-quinones but not paraquinones. No endogenous substrate for CBR3 except isatin has been identified. The sequence is that of Carbonyl reductase [NADPH] 3 from Rattus norvegicus (Rat).